A 113-amino-acid polypeptide reads, in one-letter code: Ig heavy chain V-III region T957 (113 aa).

The Ig-like domain maps to 1–113; the sequence is EVKLEESGGG…YWGQGTLVTV (113 aa). A disulfide bond links cysteine 22 and cysteine 98.

The chain is Ig heavy chain V-III region T957 from Mus musculus (Mouse).